The chain runs to 144 residues: Putative pre-16S rRNA nuclease (144 aa).

Belongs to the YqgF nuclease family.

The protein localises to the cytoplasm. In terms of biological role, could be a nuclease involved in processing of the 5'-end of pre-16S rRNA. The sequence is that of Putative pre-16S rRNA nuclease from Pseudomonas paraeruginosa (strain DSM 24068 / PA7) (Pseudomonas aeruginosa (strain PA7)).